The following is a 551-amino-acid chain: RCC1 and BTB domain-containing protein 2 (551 aa).

RCC1 repeat units follow at residues N64–T115, D117–S169, G171–D222, T223–D274, G276–S326, and G328–E382. The BTB domain occupies A394 to P457.

It is found in the cytoplasmic vesicle. The protein localises to the secretory vesicle. It localises to the acrosome. The polypeptide is RCC1 and BTB domain-containing protein 2 (Rcbtb2) (Rattus norvegicus (Rat)).